The chain runs to 152 residues: MSAATEQQNNGDVAVEKVAADDVSAVKDDLKAKAAAEDKAAAADAAGDAADNGTSKDGEDAADAAAAAPAKESVKGTKRPAEAKSAESKKAKKAAAADGDSDEEEALEEIIEGDSEIESDEYDIPYDGEEDDIECDDDDDDNDDGSGSDDQA.

Residues 29-41 (DLKAKAAAEDKAA) show a composition bias toward basic and acidic residues. Residues 29 to 152 (DLKAKAAAED…DDGSGSDDQA (124 aa)) form a disordered region. A compositionally biased stretch (low complexity) spans 42 to 51 (AADAAGDAAD). A compositionally biased stretch (basic and acidic residues) spans 72-89 (ESVKGTKRPAEAKSAESK). The segment covering 99 to 152 (GDSDEEEALEEIIEGDSEIESDEYDIPYDGEEDDIECDDDDDDNDDGSGSDDQA) has biased composition (acidic residues).

Expressed in the brain.

It is found in the nucleus. Its function is as follows. Negatively regulates tyramine beta-hydroxylase tbh and thus the conversion of tyramine (TA) to octopamine (OA). In tyrosine decarboxylase 2 (Tdc2) neurons, acts in an amine-mediated signaling pathway to negatively regulate acute ethanol sensitivity probably via tbh-mediated depletion of TA. The sequence is that of Bacchus from Drosophila melanogaster (Fruit fly).